The following is a 284-amino-acid chain: Nucleotide-binding protein Sputcn32_0712 (284 aa).

8–15 contacts ATP; that stretch reads GRSGSGKS. 56 to 59 serves as a coordination point for GTP; it reads DVRN.

It belongs to the RapZ-like family.

Displays ATPase and GTPase activities. The chain is Nucleotide-binding protein Sputcn32_0712 from Shewanella putrefaciens (strain CN-32 / ATCC BAA-453).